The chain runs to 153 residues: Pheromone-binding protein Gp-9 (153 aa).

Positions 1 to 19 are cleaved as a signal peptide; that stretch reads MKTFVLHIFIFAFVAFASA. 3 disulfides stabilise this stretch: Cys37-Cys77, Cys73-Cys129, and Cys118-Cys138.

The protein belongs to the PBP/GOBP family. In terms of assembly, homodimer.

It is found in the secreted. Colony queen number, a major feature of social organization, is associated with worker genotype for Gp-9. Colonies are headed by either a single reproductive queen (monogyne form) or multiple queens (polygyne form). Differences in worker Gp-9 genotypes between social forms may cause differences in workers' abilities to recognize queens and regulate their numbers. The protein is Pheromone-binding protein Gp-9 of Solenopsis geminata (Tropical fire ant).